Here is a 120-residue protein sequence, read N- to C-terminus: uncharacterized protein (120 aa).

The protein to phage T4 y06Q.

This is an uncharacterized protein from Escherichia coli (strain K12).